A 202-amino-acid chain; its full sequence is dTTP/UTP pyrophosphatase (202 aa).

The active-site Proton acceptor is Asp-80.

Belongs to the Maf family. YhdE subfamily. It depends on a divalent metal cation as a cofactor.

Its subcellular location is the cytoplasm. It catalyses the reaction dTTP + H2O = dTMP + diphosphate + H(+). The catalysed reaction is UTP + H2O = UMP + diphosphate + H(+). Functionally, nucleoside triphosphate pyrophosphatase that hydrolyzes dTTP and UTP. May have a dual role in cell division arrest and in preventing the incorporation of modified nucleotides into cellular nucleic acids. In Alkalilimnicola ehrlichii (strain ATCC BAA-1101 / DSM 17681 / MLHE-1), this protein is dTTP/UTP pyrophosphatase.